We begin with the raw amino-acid sequence, 629 residues long: Arginyl-tRNA--protein transferase 1 (629 aa).

Disordered stretches follow at residues 274–298 (QNNSNKNSTTTATTATTTTTTTNEP) and 353–405 (PDES…ITKE). Low complexity predominate over residues 282 to 295 (TTTATTATTTTTTT). Acidic residues predominate over residues 356-396 (SYDDYVYDGKDDDDDDDDKDEKEDDEDEDQEDDEDEDDGNN).

The protein belongs to the R-transferase family.

The enzyme catalyses an N-terminal L-alpha-aminoacyl-[protein] + L-arginyl-tRNA(Arg) = an N-terminal L-arginyl-L-aminoacyl-[protein] + tRNA(Arg) + H(+). Functionally, involved in the post-translational conjugation of arginine to the N-terminal aspartate or glutamate of a protein. This arginylation is required for degradation of the protein via the ubiquitin pathway. Does not arginylate cysteine residues. This chain is Arginyl-tRNA--protein transferase 1 (ate1), found in Dictyostelium discoideum (Social amoeba).